The primary structure comprises 233 residues: Biosynthetic peptidoglycan transglycosylase (233 aa).

The chain crosses the membrane as a helical span at residues 17 to 37 (IVLAVLALVILPYALIFFYVL).

It belongs to the glycosyltransferase 51 family.

Its subcellular location is the cell inner membrane. The catalysed reaction is [GlcNAc-(1-&gt;4)-Mur2Ac(oyl-L-Ala-gamma-D-Glu-L-Lys-D-Ala-D-Ala)](n)-di-trans,octa-cis-undecaprenyl diphosphate + beta-D-GlcNAc-(1-&gt;4)-Mur2Ac(oyl-L-Ala-gamma-D-Glu-L-Lys-D-Ala-D-Ala)-di-trans,octa-cis-undecaprenyl diphosphate = [GlcNAc-(1-&gt;4)-Mur2Ac(oyl-L-Ala-gamma-D-Glu-L-Lys-D-Ala-D-Ala)](n+1)-di-trans,octa-cis-undecaprenyl diphosphate + di-trans,octa-cis-undecaprenyl diphosphate + H(+). The protein operates within cell wall biogenesis; peptidoglycan biosynthesis. Its function is as follows. Peptidoglycan polymerase that catalyzes glycan chain elongation from lipid-linked precursors. This is Biosynthetic peptidoglycan transglycosylase from Rhizobium leguminosarum bv. trifolii (strain WSM2304).